Here is a 194-residue protein sequence, read N- to C-terminus: MTQRIASHSRKTAETDITATVNLDGTGTSAIETGVVFLDHMLTSFSRHSGIDVQLRCSGDLDVDDHHTVEDVALVLGKAIEEALGDKKGIERYGWAIIPMDEALARCSIDLGGRSYCVFKAEFRRPVIQGLSTEMVEHFFISLSRTMNANLHLAILEGQNTHHLIEALFKSLAYAMKQAVRVSGTRIPSTKESL.

This sequence belongs to the imidazoleglycerol-phosphate dehydratase family.

The protein localises to the cytoplasm. The catalysed reaction is D-erythro-1-(imidazol-4-yl)glycerol 3-phosphate = 3-(imidazol-4-yl)-2-oxopropyl phosphate + H2O. It participates in amino-acid biosynthesis; L-histidine biosynthesis; L-histidine from 5-phospho-alpha-D-ribose 1-diphosphate: step 6/9. In Chlorobaculum parvum (strain DSM 263 / NCIMB 8327) (Chlorobium vibrioforme subsp. thiosulfatophilum), this protein is Imidazoleglycerol-phosphate dehydratase.